Consider the following 390-residue polypeptide: MRYITAGESHGPQLTVILEGVPAGLTLAAEHINKELLRRQKGHGRGRRMQIETDTVEIVSGVRHGMTLGSPITLIVKNDDFKHWTKVMGAEPISEKESKEMKRTITKPRPGHADLNGAIKYGHRDIRNVLERSSARETTVRVAAGAVAKQILKELGVEIAGHVLEIGGVKAKHISNLSIEEIQIITENSPVRCLDKTVEQEMMDAIDNAKSSGDSIGGIVEVIAEGMPIGVGSYVHYDRKLDAKLAGAIMSINAFKGAEIGVGFEAARQPGSKVHDEILWDEEQGYTRKTNNAGGLEGGMTTGMPIVVRGVMKPIPTLYKPLASVDIDTKEAFQASIERSDSCAVPAAGVVAESVVAWELAHALVEQFGKDRMELIQQNITQHNKYAKEF.

R39 and R45 together coordinate NADP(+). Residues 132–134, 253–254, G298, 313–317, and R339 each bind FMN; these read RSS, NA, and KPIPT.

The protein belongs to the chorismate synthase family. As to quaternary structure, homotetramer. FMNH2 serves as cofactor.

The catalysed reaction is 5-O-(1-carboxyvinyl)-3-phosphoshikimate = chorismate + phosphate. It participates in metabolic intermediate biosynthesis; chorismate biosynthesis; chorismate from D-erythrose 4-phosphate and phosphoenolpyruvate: step 7/7. Functionally, catalyzes the anti-1,4-elimination of the C-3 phosphate and the C-6 proR hydrogen from 5-enolpyruvylshikimate-3-phosphate (EPSP) to yield chorismate, which is the branch point compound that serves as the starting substrate for the three terminal pathways of aromatic amino acid biosynthesis. This reaction introduces a second double bond into the aromatic ring system. The chain is Chorismate synthase 2 from Bacillus thuringiensis subsp. konkukian (strain 97-27).